A 577-amino-acid polypeptide reads, in one-letter code: BICD family-like cargo adapter 1 (577 aa).

A disordered region spans residues 63 to 100; it reads LLAAGERSSEPGEHPQAEPESPVEGHGPPLPPPPTQDP. The span at 69–79 shows a compositional bias: basic and acidic residues; the sequence is RSSEPGEHPQA. The CC1 box signature appears at 116–120; it reads AARLG. The stretch at 121 to 379 forms a coiled coil; it reads KALLERNQDM…QLWEAYCQVR (259 aa). Residues 389 to 415 form a disordered region; the sequence is DSADSAVSTDSSMDESSETSSAKDVPA. The span at 390-399 shows a compositional bias: low complexity; the sequence is SADSAVSTDS. Residues 443 to 528 adopt a coiled-coil conformation; it reads LSVEMTALKE…LEAWQDDMHR (86 aa).

Belongs to the BICDR family. As to quaternary structure, part of a tripartite complex with dynein and dynactin, acts an adapter linking the dynein motor complex and dynactin. Interacts with KIF1C. Interacts with RAB6A and RAB6B; interaction is specific to Rab6. As to expression, highly expressed during early embryonic development. Predominantly expressed in kidney, undifferentiated neural tissue and developing eye.

Its subcellular location is the cytoplasm. The protein resides in the cytoskeleton. It is found in the microtubule organizing center. It localises to the centrosome. Functionally, acts as an adapter protein linking the dynein motor complex to various cargos and converts dynein from a non-processive to a highly processive motor in the presence of dynactin. Facilitates the interaction between dynein and dynactin and activates dynein processivity (the ability to move along a microtubule for a long distance without falling off the track). Predominantly recruits 2 dyneins, which increases both the force and speed of the microtubule motor. Component of secretory vesicle machinery in developing neurons that acts as a regulator of neurite outgrowth. Regulates the secretory vesicle transport by controlling the accumulation of Rab6-containing secretory vesicles in the pericentrosomal region restricting anterograde secretory transport during the early phase of neuronal differentiation, thereby inhibiting neuritogenesis. This is BICD family-like cargo adapter 1 (Bicdl1) from Mus musculus (Mouse).